Reading from the N-terminus, the 37-residue chain is Photosystem II reaction center protein M (37 aa).

The helical transmembrane segment at 5–25 (ILAFIATALFILVPTAFLLII) threads the bilayer.

The protein belongs to the PsbM family. As to quaternary structure, PSII is composed of 1 copy each of membrane proteins PsbA, PsbB, PsbC, PsbD, PsbE, PsbF, PsbH, PsbI, PsbJ, PsbK, PsbL, PsbM, PsbT, PsbX, PsbY, PsbZ, Psb30/Ycf12, at least 3 peripheral proteins of the oxygen-evolving complex and a large number of cofactors. It forms dimeric complexes.

Its subcellular location is the plastid. The protein resides in the chloroplast thylakoid membrane. One of the components of the core complex of photosystem II (PSII). PSII is a light-driven water:plastoquinone oxidoreductase that uses light energy to abstract electrons from H(2)O, generating O(2) and a proton gradient subsequently used for ATP formation. It consists of a core antenna complex that captures photons, and an electron transfer chain that converts photonic excitation into a charge separation. This subunit is found at the monomer-monomer interface. This chain is Photosystem II reaction center protein M, found in Pelargonium hortorum (Common geranium).